We begin with the raw amino-acid sequence, 340 residues long: MVNVLINGYGSIGKRVADAVAKQDDMKVIGVTKTKPDFEARMAVEKGYKLFAAIPERKHLFEEAGIPVEGTLDDIIEDADIVVDGAPKKIGKANLENVYKKHGVKAILQGGEKAGDAQDSFNSLWSYDRCYGKDYIRLVSCNTTGLCRSMYAINSVADILKARIVLIRRAADPNDIKTGPVNAIVPNPVTVPSHHGPDVVSVIPQLDGKIMTSAVIVPTTLMHMHSIMVETSGTNRDEIIDALAKTPRILTLKASEGFDSTAKIIEYSRDLGRSRYDLNEIAVWEESVNVVDNEVYMMQAIHQESDVIPENVDCIRAMLEMESDNLKSIEKTNKAMGLIK.

NAD(+) is bound by residues 11–12 (SI) and G111. D-glyceraldehyde 3-phosphate is bound at residue 140-142 (SCN). C141 acts as the Nucleophile in catalysis. R169 is an NAD(+) binding site. Residue 195–196 (HG) participates in D-glyceraldehyde 3-phosphate binding. Q303 provides a ligand contact to NAD(+).

The protein belongs to the glyceraldehyde-3-phosphate dehydrogenase family. As to quaternary structure, homotetramer.

The protein localises to the cytoplasm. The enzyme catalyses D-glyceraldehyde 3-phosphate + phosphate + NADP(+) = (2R)-3-phospho-glyceroyl phosphate + NADPH + H(+). It carries out the reaction D-glyceraldehyde 3-phosphate + phosphate + NAD(+) = (2R)-3-phospho-glyceroyl phosphate + NADH + H(+). It participates in carbohydrate degradation; glycolysis; pyruvate from D-glyceraldehyde 3-phosphate: step 1/5. The polypeptide is Glyceraldehyde-3-phosphate dehydrogenase (Methanococcus maripaludis (strain C5 / ATCC BAA-1333)).